A 439-amino-acid chain; its full sequence is Omega-aminotransferase (439 aa).

112–113 is a pyridoxal 5'-phosphate binding site; it reads GS. At K281 the chain carries N6-(pyridoxal phosphate)lysine. T318 serves as a coordination point for pyridoxal 5'-phosphate.

Belongs to the class-III pyridoxal-phosphate-dependent aminotransferase family. In terms of assembly, homotetramer. Pyridoxal 5'-phosphate serves as cofactor.

The enzyme catalyses 3-oxopropanoate + L-alanine = beta-alanine + pyruvate. It carries out the reaction 3-aminobutanoate + pyruvate = acetoacetate + L-alanine. It catalyses the reaction benzylamine + pyruvate = benzaldehyde + L-alanine. The catalysed reaction is (S)-1-phenylethylamine + pyruvate = acetophenone + L-alanine. The enzyme catalyses 2-phenylethylamine + pyruvate = 2-phenylacetaldehyde + L-alanine. It carries out the reaction 1-phenylpropylamine + pyruvate = 1-phenylpropan-1-one + L-alanine. It catalyses the reaction 3-phenylpropylamine + pyruvate = 3-phenylpropanal + L-alanine. In terms of biological role, aminotransferase that can use beta-amino acids, aliphatic amines, or aromatic amines as amino donors, and pyruvate as amino acceptor. Shows high activity for short-chain beta-amino acids, with the highest activity for 3-aminobutanoate and beta-alanine in vitro. Displays higher activity toward aromatic amines than aliphatic amines. May be involved in beta-alanine biosynthesis and/or degradation. The protein is Omega-aminotransferase of Caulobacter vibrioides (strain ATCC 19089 / CIP 103742 / CB 15) (Caulobacter crescentus).